A 567-amino-acid polypeptide reads, in one-letter code: ATP-dependent RNA helicase HAS1 (567 aa).

The tract at residues Met-1–Gly-109 is disordered. Residues Glu-30–Asp-40 are compositionally biased toward acidic residues. Residues Glu-35 to Tyr-88 are a coiled coil. Residues Asp-103 to Ala-131 carry the Q motif motif. A Helicase ATP-binding domain is found at Ile-134–Tyr-310. Ala-147–Thr-154 provides a ligand contact to ATP. Positions Asp-257 to Asp-260 match the DEAD box motif. The region spanning Gly-324–Val-484 is the Helicase C-terminal domain.

The protein belongs to the DEAD box helicase family. DDX18/HAS1 subfamily. As to quaternary structure, associates in the nucleolus with the 60S and pre-60S ribosomal subunits.

It localises to the nucleus. Its subcellular location is the nucleolus. It catalyses the reaction ATP + H2O = ADP + phosphate + H(+). ATP-dependent RNA helicase involved in 40S ribosomal subunit biogenesis. Required for the processing and cleavage of 35S pre-rRNA at sites A0, A1, and A2, leading to mature 18S rRNA. The protein is ATP-dependent RNA helicase HAS1 (HAS1) of Scheffersomyces stipitis (strain ATCC 58785 / CBS 6054 / NBRC 10063 / NRRL Y-11545) (Yeast).